Here is a 293-residue protein sequence, read N- to C-terminus: Probable metal transport system membrane protein TC_0698 (293 aa).

7 helical membrane passes run 18–38 (SLLAAFGASIAGGIVGSYIVV), 41–61 (IVSISGSIAHSILGGVGIALW), 68–88 (LPISPLHGAIASAIFVAICIG), 101–121 (IISMIWSIGMAVGMLCISKLP), 142–162 (DLYFLGILDLLIVATVSICHT), 186–206 (FLLLILTAITTVVLMYVMGVI), and 242–262 (FLGIILAYILDLPVGPIIAIL).

It belongs to the ABC-3 integral membrane protein family.

It is found in the cell inner membrane. In terms of biological role, part of an ATP-driven transport system TC_0696/TC_0697/TC_0698 for a metal. The protein is Probable metal transport system membrane protein TC_0698 of Chlamydia muridarum (strain MoPn / Nigg).